Here is a 126-residue protein sequence, read N- to C-terminus: S-adenosylmethionine decarboxylase proenzyme (126 aa).

Serine 63 functions as the Schiff-base intermediate with substrate; via pyruvic acid in the catalytic mechanism. Serine 63 is subject to Pyruvic acid (Ser); by autocatalysis. The Proton acceptor; for processing activity role is filled by histidine 68. Catalysis depends on cysteine 83, which acts as the Proton donor; for catalytic activity.

This sequence belongs to the prokaryotic AdoMetDC family. Type 1 subfamily. As to quaternary structure, heterotetramer of two alpha and two beta chains arranged as a dimer of alpha/beta heterodimers. Pyruvate is required as a cofactor. Is synthesized initially as an inactive proenzyme. Formation of the active enzyme involves a self-maturation process in which the active site pyruvoyl group is generated from an internal serine residue via an autocatalytic post-translational modification. Two non-identical subunits are generated from the proenzyme in this reaction, and the pyruvate is formed at the N-terminus of the alpha chain, which is derived from the carboxyl end of the proenzyme. The post-translation cleavage follows an unusual pathway, termed non-hydrolytic serinolysis, in which the side chain hydroxyl group of the serine supplies its oxygen atom to form the C-terminus of the beta chain, while the remainder of the serine residue undergoes an oxidative deamination to produce ammonia and the pyruvoyl group blocking the N-terminus of the alpha chain.

It catalyses the reaction S-adenosyl-L-methionine + H(+) = S-adenosyl 3-(methylsulfanyl)propylamine + CO2. It participates in amine and polyamine biosynthesis; S-adenosylmethioninamine biosynthesis; S-adenosylmethioninamine from S-adenosyl-L-methionine: step 1/1. Functionally, catalyzes the decarboxylation of S-adenosylmethionine to S-adenosylmethioninamine (dcAdoMet), the propylamine donor required for the synthesis of the polyamines spermine and spermidine from the diamine putrescine. The polypeptide is S-adenosylmethionine decarboxylase proenzyme (Bacillus velezensis (strain DSM 23117 / BGSC 10A6 / LMG 26770 / FZB42) (Bacillus amyloliquefaciens subsp. plantarum)).